A 63-amino-acid chain; its full sequence is Large ribosomal subunit protein uL30 (63 aa).

Belongs to the universal ribosomal protein uL30 family. In terms of assembly, part of the 50S ribosomal subunit.

This is Large ribosomal subunit protein uL30 from Rickettsia akari (strain Hartford).